Consider the following 485-residue polypeptide: Glutamate--tRNA ligase (485 aa).

The 'HIGH' region motif lies at 11–21; the sequence is PSPTGHLHIGN. A 'KMSKS' region motif is present at residues 252–256; sequence KLSKR. Lys255 provides a ligand contact to ATP.

This sequence belongs to the class-I aminoacyl-tRNA synthetase family. Glutamate--tRNA ligase type 1 subfamily. As to quaternary structure, monomer.

It is found in the cytoplasm. It carries out the reaction tRNA(Glu) + L-glutamate + ATP = L-glutamyl-tRNA(Glu) + AMP + diphosphate. Its function is as follows. Catalyzes the attachment of glutamate to tRNA(Glu) in a two-step reaction: glutamate is first activated by ATP to form Glu-AMP and then transferred to the acceptor end of tRNA(Glu). The sequence is that of Glutamate--tRNA ligase from Bacillus cytotoxicus (strain DSM 22905 / CIP 110041 / 391-98 / NVH 391-98).